A 217-amino-acid chain; its full sequence is Adenylate kinase (217 aa).

Residue 10–15 (GAGKGT) coordinates ATP. The segment at 30–59 (STGDMFREAVAAGTELGVKVQNILSSGALV) is NMP. AMP-binding positions include Thr31, Arg36, 57–59 (ALV), 85–88 (GYPR), and Gln92. An LID region spans residues 126–163 (SRRICPKCGKIYNLISMPPVSDQICDDCGEQLVIREDD). Arg127 contacts ATP. 2 residues coordinate Zn(2+): Cys130 and Cys133. 136–137 (IY) is an ATP binding site. Zn(2+)-binding residues include Cys150 and Cys153. Residues Arg160 and Arg171 each contribute to the AMP site. Arg199 provides a ligand contact to ATP.

Belongs to the adenylate kinase family. In terms of assembly, monomer.

It is found in the cytoplasm. The enzyme catalyses AMP + ATP = 2 ADP. Its pathway is purine metabolism; AMP biosynthesis via salvage pathway; AMP from ADP: step 1/1. Functionally, catalyzes the reversible transfer of the terminal phosphate group between ATP and AMP. Plays an important role in cellular energy homeostasis and in adenine nucleotide metabolism. The chain is Adenylate kinase from Pseudothermotoga lettingae (strain ATCC BAA-301 / DSM 14385 / NBRC 107922 / TMO) (Thermotoga lettingae).